Reading from the N-terminus, the 474-residue chain is Type I restriction enzyme EcoBI specificity subunit (474 aa).

The protein belongs to the type-I restriction system S methylase family. As to quaternary structure, the type I restriction/modification system is composed of three polypeptides R, M and S. The restriction enzyme has stoichiometry R(2)M(2)S(1) while the methyltransferase is M(2)S(1).

Functionally, the specificity (S) subunit of a type I restriction enzyme; this subunit dictates DNA sequence specificity. The M and S subunits together form a methyltransferase (MTase) that methylates A-3 on the top strand and A-4 on the bottom strand of the sequence 5'-TGAN(8)TGCT-3'. In the presence of the R subunit the complex can also act as an endonuclease, binding to the same target sequence but cutting the DNA some distance from this site. Whether the DNA is cut or modified depends on the methylation state of the target sequence. When the target site is unmodified, the DNA is cut. When the target site is hemimethylated, the complex acts as a maintenance MTase modifying the DNA so that both strands become methylated. After locating a non-methylated recognition site, the enzyme complex serves as a molecular motor that translocates DNA in an ATP-dependent manner until a collision occurs that triggers cleavage. This is Type I restriction enzyme EcoBI specificity subunit from Escherichia coli.